An 813-amino-acid polypeptide reads, in one-letter code: Hyaluronate lyase HylB (813 aa).

The tat-type signal signal peptide spans 1-32 (MFGTPSRRTFLTASALSAMALAASPTVTDAIA). Catalysis depends on residues N222, H272, and Y281.

It belongs to the polysaccharide lyase 8 family. In terms of processing, predicted to be exported by the Tat system. The position of the signal peptide cleavage has not been experimentally proven.

The protein resides in the secreted. The enzyme catalyses [hyaluronan](n) = n 3-(4-deoxy-beta-D-gluc-4-enuronosyl)-N-acetyl-D-glucosamine + H2O. Degrades hyaluronic acid (HA) exclusively into HA disaccharides (HA-2). Produced HA-2s confer anti-inflammatory properties leading to reduced immunopathology in the mouse model of acne. This Cutibacterium acnes (strain DSM 16379 / KPA171202) (Propionibacterium acnes) protein is Hyaluronate lyase HylB.